A 311-amino-acid chain; its full sequence is tRNA dimethylallyltransferase (311 aa).

Residue 12 to 19 participates in ATP binding; it reads GPTASGKT. 14–19 is a binding site for substrate; it reads TASGKT. Interaction with substrate tRNA stretches follow at residues 37–40 and 161–165; these read DSAM and QRIQR.

This sequence belongs to the IPP transferase family. Monomer. Mg(2+) is required as a cofactor.

The catalysed reaction is adenosine(37) in tRNA + dimethylallyl diphosphate = N(6)-dimethylallyladenosine(37) in tRNA + diphosphate. Its function is as follows. Catalyzes the transfer of a dimethylallyl group onto the adenine at position 37 in tRNAs that read codons beginning with uridine, leading to the formation of N6-(dimethylallyl)adenosine (i(6)A). The chain is tRNA dimethylallyltransferase from Coxiella burnetii (strain RSA 331 / Henzerling II).